Reading from the N-terminus, the 256-residue chain is Trypsinogen-like protein 3 (256 aa).

Residues 1 to 14 form the signal peptide; sequence MILLLVLALGLAGA. The region spanning 15 to 237 is the Peptidase S1 domain; sequence SPLGEYKECP…YNDWIHQVMA (223 aa). 6 disulfide bridges follow: Cys-23–Cys-153, Cys-41–Cys-57, Cys-125–Cys-226, Cys-132–Cys-199, Cys-164–Cys-180, and Cys-189–Cys-213.

This sequence belongs to the peptidase S1 family.

The sequence is that of Trypsinogen-like protein 3 (trp3) from Pseudopleuronectes americanus (Winter flounder).